We begin with the raw amino-acid sequence, 225 residues long: NAD(P)H-quinone oxidoreductase subunit K, chloroplastic (225 aa).

Positions 43, 44, 108, and 139 each coordinate [4Fe-4S] cluster.

This sequence belongs to the complex I 20 kDa subunit family. In terms of assembly, NDH is composed of at least 16 different subunits, 5 of which are encoded in the nucleus. Requires [4Fe-4S] cluster as cofactor.

The protein localises to the plastid. It localises to the chloroplast thylakoid membrane. It carries out the reaction a plastoquinone + NADH + (n+1) H(+)(in) = a plastoquinol + NAD(+) + n H(+)(out). The catalysed reaction is a plastoquinone + NADPH + (n+1) H(+)(in) = a plastoquinol + NADP(+) + n H(+)(out). Functionally, NDH shuttles electrons from NAD(P)H:plastoquinone, via FMN and iron-sulfur (Fe-S) centers, to quinones in the photosynthetic chain and possibly in a chloroplast respiratory chain. The immediate electron acceptor for the enzyme in this species is believed to be plastoquinone. Couples the redox reaction to proton translocation, and thus conserves the redox energy in a proton gradient. This Solanum bulbocastanum (Wild potato) protein is NAD(P)H-quinone oxidoreductase subunit K, chloroplastic.